Here is a 314-residue protein sequence, read N- to C-terminus: Homoserine O-acetyltransferase (314 aa).

C142 acts as the Acyl-thioester intermediate in catalysis. Substrate contacts are provided by K163 and S192. Catalysis depends on H235, which acts as the Proton acceptor. E237 is an active-site residue. R249 provides a ligand contact to substrate.

This sequence belongs to the MetA family.

The protein localises to the cytoplasm. It carries out the reaction L-homoserine + acetyl-CoA = O-acetyl-L-homoserine + CoA. The protein operates within amino-acid biosynthesis; L-methionine biosynthesis via de novo pathway; O-acetyl-L-homoserine from L-homoserine: step 1/1. In terms of biological role, transfers an acetyl group from acetyl-CoA to L-homoserine, forming acetyl-L-homoserine. This is Homoserine O-acetyltransferase from Desulfovibrio desulfuricans (strain ATCC 27774 / DSM 6949 / MB).